Consider the following 547-residue polypeptide: Auxin transporter-like protein 3 (547 aa).

The Cytoplasmic segment spans residues 1 to 74; the sequence is MASGSSGGGY…DAWFSCASNQ (74 aa). A helical transmembrane segment spans residues 75 to 92; sequence VAQVLLTLPYSFAQLGMA. Over 93–94 the chain is Extracellular; sequence SG. The chain crosses the membrane as a helical span at residues 95-115; that stretch reads LLFQLFYGLLGSWTAYLISIL. At 116 to 151 the chain is on the cytoplasmic side; the sequence is YLEYRTRKERDKVDFRNHVIQWFEVLDGLLGRHWRN. The chain crosses the membrane as a helical span at residues 152–172; the sequence is VGLAFNCTFLLFGSVIQLIGC. Topologically, residues 173-187 are extracellular; that stretch reads ASNIYYINDHLDKRT. Residues 188–208 traverse the membrane as a helical segment; that stretch reads WTYIFGACCATTVFIPSFHNY. Residues 209–211 are Cytoplasmic-facing; it reads RIW. Residues 212-232 form a helical membrane-spanning segment; sequence SFLGLLMTTYTAWYIAVASLI. Residues 233–247 lie on the Extracellular side of the membrane; sequence HGQVEGVAHSGPTSI. The helical transmembrane segment at 248–268 threads the bilayer; that stretch reads VLYFTGATNILYTFGGHAVTV. The Cytoplasmic portion of the chain corresponds to 269–281; it reads EIMHAMWRPQKFK. The helical transmembrane segment at 282-302 threads the bilayer; that stretch reads AIYLLATVYVLTLTLPSASAA. Over 303-329 the chain is Extracellular; it reads YWAFGDALLTHSNALALLPRTPWRDAA. A helical membrane pass occupies residues 330–350; it reads VVLMLIHQFITFGFACTPLYF. Topologically, residues 351–371 are cytoplasmic; sequence VWEKLVGLHGCPSLCKRAAAR. The helical transmembrane segment at 372–392 threads the bilayer; that stretch reads LPVVLPIWFLAIIFPFFGPIN. Residue Ser-393 is a topological domain, extracellular. The chain crosses the membrane as a helical span at residues 394–414; that stretch reads AVGSLLVSFTVYIIPSLAYMV. Over 415-440 the chain is Cytoplasmic; the sequence is TFRSPQSRQNAVERPPRFAGGWTGAY. The helical transmembrane segment at 441–461 threads the bilayer; sequence VINSFVVAWVLVVGFGFGGWA. Residues 462 to 547 lie on the Extracellular side of the membrane; that stretch reads SITNFVHQVD…HHHRHHRHGL (86 aa). Asn-509 is a glycosylation site (N-linked (GlcNAc...) asparagine).

Belongs to the amino acid/polyamine transporter 2 family. Amino acid/auxin permease (AAAP) (TC 2.A.18.1) subfamily.

Its subcellular location is the cell membrane. Its function is as follows. Carrier protein involved in proton-driven auxin influx. May mediate the formation of auxin gradient from developing leaves (site of auxin biosynthesis) to tips. This chain is Auxin transporter-like protein 3, found in Oryza sativa subsp. japonica (Rice).